The primary structure comprises 419 residues: Mitochondrial chaperone BCS1 (419 aa).

The Mitochondrial intermembrane portion of the chain corresponds to 2–15; the sequence is PLSDFILALKDNPY. Residues 16-32 traverse the membrane as a helical segment; that stretch reads FGAGFGLVGVGTALALA. Topologically, residues 33–419 are mitochondrial matrix; that stretch reads RKGVQLGLVA…AIHNAESLRR (387 aa). Phosphotyrosine is present on Tyr-181. 230 to 237 lines the ATP pocket; sequence GPPGCGKS.

This sequence belongs to the AAA ATPase family. BCS1 subfamily. In terms of assembly, interacts with LETM1. As to expression, ubiquitous.

It is found in the mitochondrion inner membrane. It catalyses the reaction ATP + H2O = ADP + phosphate + H(+). Functionally, chaperone necessary for the incorporation of Rieske iron-sulfur protein UQCRFS1 into the mitochondrial respiratory chain complex III. Plays an important role in the maintenance of mitochondrial tubular networks, respiratory chain assembly and formation of the LETM1 complex. This is Mitochondrial chaperone BCS1 (BCS1L) from Homo sapiens (Human).